The primary structure comprises 485 residues: E3 ubiquitin-protein ligase TRIM34B (485 aa).

The RING-type zinc-finger motif lies at 15–58 (CPVCQELLTKALSLGCGHLVCQACLISNKNAVINPRGKSSCPVC). A B box-type zinc finger spans residues 91 to 127 (TKRDLCVHHGEKLLLFCKEDKKVICWVCERSQEHRGH). Zn(2+) is bound by residues Cys96, His99, Cys118, and His124. Residues 136–170 (VRECQENLQKALTRLRKEQEKVETLEADIKEDRLS) adopt a coiled-coil conformation. The region spanning 282-485 (LSGMLQKFRE…APMTLCPLNS (204 aa)) is the B30.2/SPRY domain.

Belongs to the TRIM/RBCC family. Homotrimer. Interacts (via B-box and SPRY domain) with TRIM5.

It is found in the cytoplasm. Its subcellular location is the mitochondrion. It catalyses the reaction S-ubiquitinyl-[E2 ubiquitin-conjugating enzyme]-L-cysteine + [acceptor protein]-L-lysine = [E2 ubiquitin-conjugating enzyme]-L-cysteine + N(6)-ubiquitinyl-[acceptor protein]-L-lysine.. The protein operates within protein modification; protein ubiquitination. In terms of biological role, functions as antiviral protein and contributes to the defense against retroviral infections. Acts as a capsid-specific restriction factor with the help of TRIM5 and prevents infection from non-host-adapted retroviruses. During influenza A virus infection, promotes programmed cell death by targeting ZBP1 for 'Lys-63'-linked polyubiquitination. In turn, promotes ZBP1 recruitment of RIPK3 to mediate virus-induced programmed necrosis. Negatively regulates the function of mitochondria by enhancing mitochondrial depolarization leading to cytochrome c release and mitochondria-dependent apoptosis. Also promotes the formation of multinucleated giant cells by means of cell fusion and phagocytosis in epithelial cells. Regulates intestinal inflammation by controlling the exocytosis of the major component of colonic mucus MUC2 from colonic goblet cells. The polypeptide is E3 ubiquitin-protein ligase TRIM34B (Mus musculus (Mouse)).